The following is a 262-amino-acid chain: Hydroxyethylthiazole kinase (262 aa).

Residue Met50 coordinates substrate. ATP contacts are provided by Arg125 and Thr171. Gly198 lines the substrate pocket.

Belongs to the Thz kinase family. Requires Mg(2+) as cofactor.

The enzyme catalyses 5-(2-hydroxyethyl)-4-methylthiazole + ATP = 4-methyl-5-(2-phosphooxyethyl)-thiazole + ADP + H(+). Its pathway is cofactor biosynthesis; thiamine diphosphate biosynthesis; 4-methyl-5-(2-phosphoethyl)-thiazole from 5-(2-hydroxyethyl)-4-methylthiazole: step 1/1. Functionally, catalyzes the phosphorylation of the hydroxyl group of 4-methyl-5-beta-hydroxyethylthiazole (THZ). The polypeptide is Hydroxyethylthiazole kinase (Escherichia coli (strain K12 / MC4100 / BW2952)).